The chain runs to 342 residues: (Lyso)-N-acylphosphatidylethanolamine lipase (342 aa).

An AB hydrolase-1 domain is found at 70–324; it reads PLVMVHGFGG…IEGASHHVYA (255 aa).

It belongs to the peptidase S33 family. ABHD4/ABHD5 subfamily.

The enzyme catalyses N-hexadecanoyl-1,2-di-(9Z-octadecenoyl)-sn-glycero-3-phosphoethanolamine + H2O = N-hexadecanoyl-1-(9Z-octadecenoyl)-sn-glycero-3-phosphoethanolamine + (9Z)-octadecenoate + H(+). It catalyses the reaction an N-acyl-1,2-diacyl-sn-glycero-3-phosphoethanolamine + H2O = N,1-diacyl-sn-glycero-3-phosphoethanolamine + a fatty acid + H(+). It carries out the reaction N-hexadecanoyl-1-(9Z-octadecenoyl)-sn-glycero-3-phosphoethanolamine + H2O = N-hexadecanoyl-sn-glycero-3-phosphoethanolamine + (9Z)-octadecenoate + H(+). The catalysed reaction is N-octadecanoyl-1-(9Z-octadecenoyl)-sn-glycero-3-phosphoethanolamine + H2O = N-octadecanoyl-sn-glycero-3-phospho-ethanolamine + (9Z)-octadecenoate + H(+). The enzyme catalyses N-eicosanoyl-1-(9Z-octadecenoyl)-sn-glycero-3-phosphoethanolamine + H2O = N-eicosanoyl-sn-glycero-3-phosphoethanolamine + (9Z)-octadecenoate + H(+). It catalyses the reaction N,1-di-(9Z-octadecenoyl)-sn-glycero-3-phosphoethanolamine + H2O = N-(9Z-octadecenoyl)-sn-glycero-3-phosphoethanolamine + (9Z)-octadecenoate + H(+). It carries out the reaction N-(5Z,8Z,11Z,14Z-eicosatetraenoyl)-1-(9Z-octadecenoyl)-sn-glycero-3-phosphoethanolamine + H2O = N-(5Z,8Z,11Z,14Z-eicosatetraenoyl)-sn-glycero-3-phosphoethanolamine + (9Z)-octadecenoate + H(+). The catalysed reaction is 1-octadecanoyl-2-(9Z-octadecenoyl)-sn-glycero-3-phospho-(N-hexadecanoyl)-serine + H2O = 1-octadecanoyl-2-hydroxy-sn-glycero-3-phospho-(N-hexadecanoyl)-serine + (9Z)-octadecenoate + H(+). The enzyme catalyses 1-O-(1Z-octadecenoyl)-2-(9Z-octadecenoyl)-sn-glycero-3-phospho-N-hexadecanoyl-ethanolamine + H2O = 1-O-(1Z-octadecenyl)-sn-glycero-3-phospho-N-hexadecanoyl-ethanolamine + (9Z)-octadecenoate + H(+). It catalyses the reaction N,1-diacyl-sn-glycero-3-phosphoethanolamine + H2O = N-acyl-sn-glycero-3-phosphoethanolamine + a fatty acid + H(+). Functionally, lysophospholipase selective for N-acyl phosphatidylethanolamine (NAPE). Contributes to the biosynthesis of N-acyl ethanolamines, including the endocannabinoid anandamide by hydrolyzing the sn-1 and sn-2 acyl chains from N-acyl phosphatidylethanolamine (NAPE) generating glycerophospho-N-acyl ethanolamine (GP-NAE), an intermediate for N-acyl ethanolamine biosynthesis. Hydrolyzes substrates bearing saturated, monounsaturated, polyunsaturated N-acyl chains. Shows no significant activity towards other lysophospholipids, including lysophosphatidylcholine, lysophosphatidylethanolamine and lysophosphatidylserine. The chain is (Lyso)-N-acylphosphatidylethanolamine lipase from Bos taurus (Bovine).